The primary structure comprises 389 residues: Nucleic acid dioxygenase ALKBH1 (389 aa).

Positions 1 to 127 are interaction with DNAJB6; that stretch reads MGKMAAAVAS…CLKLYSQKPN (127 aa). Residues 86 to 389 form a tRNA-binding region; it reads SKWRAYGLEG…VKRKRLNPNS (304 aa). Substrate contacts are provided by residues Trp-144 and 175-177; that span reads YHY. The Fe2OG dioxygenase domain maps to 213–347; the sequence is QAEAGILNYY…RVNMTVRQVL (135 aa). 220–222 serves as a coordination point for 2-oxoglutarate; it reads NYY. His-231, Asp-233, and His-287 together coordinate Fe cation. Asp-233 serves as a coordination point for substrate. Position 338 to 344 (338 to 344) interacts with 2-oxoglutarate; it reads RVNMTVR.

In terms of assembly, monomer. Interacts with DNAJB6. The cofactor is Fe(2+). As to expression, in adult organs, highly expressed in testis, eye, brain and kidney.

It localises to the nucleus. The enzyme catalyses an N(6)-methyl-2'-deoxyadenosine in DNA + 2-oxoglutarate + O2 = a 2'-deoxyadenosine in DNA + formaldehyde + succinate + CO2. It catalyses the reaction 2'-deoxyribonucleotide-(2'-deoxyribose 5'-phosphate)-2'-deoxyribonucleotide-DNA = a 3'-end 2'-deoxyribonucleotide-(2,3-dehydro-2,3-deoxyribose 5'-phosphate)-DNA + a 5'-end 5'-phospho-2'-deoxyribonucleoside-DNA + H(+). It carries out the reaction a methylated nucleobase within DNA + 2-oxoglutarate + O2 = a nucleobase within DNA + formaldehyde + succinate + CO2. The catalysed reaction is an N(1)-methyladenosine in tRNA + 2-oxoglutarate + O2 = an adenosine in tRNA + formaldehyde + succinate + CO2. The enzyme catalyses 5-methylcytidine(34) in mitochondrial tRNA(Met) + 2 2-oxoglutarate + 2 O2 = 5-formylcytidine(34) in mitochondrial tRNA(Met) + 2 succinate + 2 CO2 + H2O. It catalyses the reaction an N(3)-methylcytidine in mRNA + 2-oxoglutarate + O2 = a cytidine in mRNA + formaldehyde + succinate + CO2. It carries out the reaction N(1)-methyladenosine(58) in tRNA + 2-oxoglutarate + O2 = adenosine(58) in tRNA + formaldehyde + succinate + CO2. Dioxygenase that acts on nucleic acids, such as DNA and tRNA. Requires molecular oxygen, alpha-ketoglutarate and iron. A number of activities have been described for this dioxygenase, but recent results suggest that it mainly acts on tRNAs and mediates their demethylation or oxidation depending on the context and subcellular compartment. Mainly acts as a tRNA demethylase by removing N(1)-methyladenine from various tRNAs, with a preference for N(1)-methyladenine at position 58 (m1A58) present on a stem loop structure of tRNAs. Acts as a regulator of translation initiation and elongation in response to glucose deprivation: regulates both translation initiation, by mediating demethylation of tRNA(Met), and translation elongation, N(1)-methyladenine-containing tRNAs being preferentially recruited to polysomes to promote translation elongation. In mitochondrion, specifically interacts with mt-tRNA(Met) and mediates oxidation of mt-tRNA(Met) methylated at cytosine(34) to form 5-formylcytosine (f(5)c) at this position. mt-tRNA(Met) containing the f(5)c modification at the wobble position enables recognition of the AUA codon in addition to the AUG codon, expanding codon recognition in mitochondrial translation. Specifically demethylates DNA methylated on the 6th position of adenine (N(6)-methyladenosine) DNA. N(6)-methyladenosine (m6A) DNA is present at some L1 elements in embryonic stem cells and probably promotes their silencing. Demethylates mRNAs containing N(3)-methylcytidine modification. Also able to repair alkylated single-stranded DNA by oxidative demethylation, but with low activity. Also has DNA lyase activity and introduces double-stranded breaks at abasic sites: cleaves both single-stranded DNA and double-stranded DNA at abasic sites, with the greatest activity towards double-stranded DNA with two abasic sites. DNA lyase activity does not require alpha-ketoglutarate and iron and leads to the formation of an irreversible covalent protein-DNA adduct with the 5' DNA product. DNA lyase activity is not required during base excision repair and class switch recombination of the immunoglobulin heavy chain during B lymphocyte activation. May play a role in placental trophoblast lineage differentiation. The protein is Nucleic acid dioxygenase ALKBH1 of Mus musculus (Mouse).